The sequence spans 498 residues: MTEDIRVRYAPSPTGHLHIGNARTAIFNWLFARHYNGTFVIRIEDTDSARNIADGEKSQLENLAWLGLDWDESPDKPGVYGPYRQSERNEQGIYQEFIDALLASGQAYKSYKTSGQLASEREAQQAAKQAPHYVYEYEGLTNEEREAKYAEFEAQGLKPVVRFRVPEEQVYAWDDIVKGHIEIGAKEVGGDWVIQKADGMPTYNFAVVVDDHLMKISHVLRGDDHVSNTPKQIMIYEALGWDVPKFGHMALIINGETGKKLSKRDENLLQFVEQYKELGYQPQAMVNFIGLLGWSPKGEDEIFSLSEFKEMFDEKRLSKANAKFDQKKLEWVNNQWMRRDTDAVMPQLIQELVNAHLISADDAADKKKWLSEVIKVAGVDGISYTRQIVELVRKPFFELGDITDEMVEYLTSEDGRKVAAAWESTYESLPTDATPADYMSTIRAIQNDLEIKGRNLWNPIRIMTTHEVQGPNLPEMLTLLDKNTVLKTMRDVKEKYLA.

The 'HIGH' region motif lies at 11–21; it reads PSPTGHLHIGN. Residues 260-264 carry the 'KMSKS' region motif; the sequence is KLSKR. An ATP-binding site is contributed by Lys263.

It belongs to the class-I aminoacyl-tRNA synthetase family. Glutamate--tRNA ligase type 1 subfamily. As to quaternary structure, monomer.

The protein localises to the cytoplasm. It carries out the reaction tRNA(Glu) + L-glutamate + ATP = L-glutamyl-tRNA(Glu) + AMP + diphosphate. In terms of biological role, catalyzes the attachment of glutamate to tRNA(Glu) in a two-step reaction: glutamate is first activated by ATP to form Glu-AMP and then transferred to the acceptor end of tRNA(Glu). The protein is Glutamate--tRNA ligase of Leuconostoc mesenteroides subsp. mesenteroides (strain ATCC 8293 / DSM 20343 / BCRC 11652 / CCM 1803 / JCM 6124 / NCDO 523 / NBRC 100496 / NCIMB 8023 / NCTC 12954 / NRRL B-1118 / 37Y).